We begin with the raw amino-acid sequence, 229 residues long: Non-structural protein P8 (229 aa).

The segment at 14 to 26 (MKHNQDRVEELSL) is CCM-I. Residues 94–116 (IKRHVNEQILPKLKSDLSELKKK) are CCM-III. 2 helical membrane passes run 119-139 (IIHT…VCTL) and 162-182 (SLNP…MVCA). A CCM-II region spans residues 185 to 198 (ERALNQQIDMIKKE).

It belongs to the orbivirus NS3 family. As to quaternary structure, forms homooligomers via coiled-coil motif. Interacts with host OPTN; this interaction inhibits innate immune response.

The protein resides in the host cell membrane. It is found in the host Golgi apparatus. Its function is as follows. Plays a role in the inhibition of host innate immune response. Interacts with host OPTN and thus inhibits the recruitment of TBK1 to the host Golgi apparatus. In turn, downstream partner IRF3 cannot be activated and IFN-beta production is impaired. In terms of biological role, facilitates viral particle release either by increasing plasma membrane permeability through a viroporin-like activity or by viral budding. The chain is Non-structural protein P8 (Segment-10) from Bluetongue virus 10 (isolate USA) (BTV 10).